The sequence spans 417 residues: UDP-N-acetylglucosamine 1-carboxyvinyltransferase (417 aa).

22 to 23 is a phosphoenolpyruvate binding site; that stretch reads KN. A UDP-N-acetyl-alpha-D-glucosamine-binding site is contributed by arginine 94. The active-site Proton donor is the cysteine 118. Cysteine 118 carries the 2-(S-cysteinyl)pyruvic acid O-phosphothioketal modification. Residues 123–127, aspartate 306, and isoleucine 328 each bind UDP-N-acetyl-alpha-D-glucosamine; that span reads RPIDQ.

This sequence belongs to the EPSP synthase family. MurA subfamily.

It localises to the cytoplasm. It catalyses the reaction phosphoenolpyruvate + UDP-N-acetyl-alpha-D-glucosamine = UDP-N-acetyl-3-O-(1-carboxyvinyl)-alpha-D-glucosamine + phosphate. It participates in cell wall biogenesis; peptidoglycan biosynthesis. Its function is as follows. Cell wall formation. Adds enolpyruvyl to UDP-N-acetylglucosamine. The chain is UDP-N-acetylglucosamine 1-carboxyvinyltransferase from Clostridium botulinum (strain ATCC 19397 / Type A).